We begin with the raw amino-acid sequence, 1500 residues long: Copper-transporting ATPase 1 (1500 aa).

Over 1–653 (MDPSMGVNSV…KREIRQWRRS (653 aa)) the chain is Cytoplasmic. HMA domains are found at residues 8 to 74 (NSVT…FDAV) and 85 to 151 (TDTL…LDTG). Cu(+) contacts are provided by Thr18, Cys19, and Cys22. Thr152 bears the Phosphothreonine mark. An HMA 3 domain is found at 171-237 (VVLKMKVEGM…QIEAMGFPAF (67 aa)). Residues Cys182 and Cys185 each contribute to the Cu(+) site. Ser270 is subject to Phosphoserine. The 67-residue stretch at 277 to 343 (STATFIIDGM…AIEAVSPGLY (67 aa)) folds into the HMA 4 domain. The Cu(+) site is built by Cys288 and Cys291. Residue Thr327 is modified to Phosphothreonine. 4 positions are modified to phosphoserine: Ser339, Ser353, Ser357, and Ser362. 3 HMA domains span residues 377 to 443 (QETV…FDAT), 488 to 554 (SKCY…FGAT), and 564 to 630 (GVLE…FEAS). Cys388, Cys391, Cys499, Cys502, Cys575, and Cys578 together coordinate Cu(+). Residues 654-675 (FLVSLFFCIPVMGLMIYMMVMD) traverse the membrane as a helical segment. Residues 676-714 (HHFATLHHNQNMSKEEMINLHSSMFLERQILPGLSVMNL) lie on the Extracellular side of the membrane. The N-linked (GlcNAc...) asparagine glycan is linked to Asn686. The chain crosses the membrane as a helical span at residues 715–734 (LSFLLCVPVQFFGGWYFYIQ). Residues 735–741 (AYKALKH) lie on the Cytoplasmic side of the membrane. Residues 742–762 (KTANMDVLIVLATTIAFAYSL) form a helical membrane-spanning segment. Residues 763–781 (IILLVAMYERAKVNPITFF) are Extracellular-facing. The helical transmembrane segment at 782–802 (DTPPMLFVFIALGRWLEHIAK) threads the bilayer. The Cytoplasmic segment spans residues 803 to 936 (GKTSEALAKL…KAPIQQFADK (134 aa)). The chain crosses the membrane as a helical span at residues 937–959 (LSGYFVPFIVFVSIATLLVWIVI). Over 960-989 (GFLNFEIVETYFPGYNRSISRTETIIRFAF) the chain is Extracellular. Asn975 is a glycosylation site (N-linked (GlcNAc...) asparagine). The chain crosses the membrane as a helical span at residues 990–1011 (QASITVLCIACPCSLGLATPTA). Topologically, residues 1012–1356 (VMVGTGVGAQ…LSRKTVKRIR (345 aa)) are cytoplasmic. The active-site 4-aspartylphosphate intermediate is Asp1044. Residue Glu1081 participates in ATP binding. Position 1212 is a phosphothreonine (Thr1212). Mg(2+) contacts are provided by Asp1301 and Asp1305. Residues 1357-1374 (INFVFALIYNLVGIPIAA) form a helical membrane-spanning segment. Residues 1375-1385 (GVFMPIGLVLQ) lie on the Extracellular side of the membrane. The helical transmembrane segment at 1386-1405 (PWMGSAAMAASSVSVVLSSL) threads the bilayer. The Cytoplasmic portion of the chain corresponds to 1406–1500 (FLKLYRKPTY…DFREDDDTAL (95 aa)). Phosphoserine is present on residues Ser1430, Ser1432, Ser1460, Ser1463, and Ser1466. Residues 1467-1468 (LL) carry the Endocytosis signal motif. Residues Ser1469, Ser1473, Ser1476, and Ser1486 each carry the phosphoserine modification. The segment at 1486-1500 (SLLVGDFREDDDTAL) is PDZD11-binding. The Endocytosis signal motif lies at 1487–1488 (LL).

The protein belongs to the cation transport ATPase (P-type) (TC 3.A.3) family. Type IB subfamily. Monomer. Interacts with PDZD11. Interacts with ATOX1 and COMMD1. Interacts with TYRP1. Directly interacts with SOD3; this interaction is copper-dependent and is required for SOD3 activity. As to expression, widely expressed including in heart, brain, lung, muscle, kidney, pancreas, and to a lesser extent placenta. Expressed in fibroblasts, aortic smooth muscle cells, aortic endothelial cells and umbilical vein endothelial cells (at protein level). Expressed in cerebellum and brain cortex.

It is found in the golgi apparatus. The protein localises to the trans-Golgi network membrane. Its subcellular location is the cell membrane. The protein resides in the melanosome membrane. It localises to the early endosome membrane. It is found in the cell projection. The protein localises to the axon. Its subcellular location is the dendrite. The protein resides in the postsynaptic density. It localises to the cytoplasm. It is found in the cytosol. The protein localises to the endoplasmic reticulum. It catalyses the reaction Cu(+)(in) + ATP + H2O = Cu(+)(out) + ADP + phosphate + H(+). ATP-driven copper (Cu(+)) ion pump that plays an important role in intracellular copper ion homeostasis. Within a catalytic cycle, acquires Cu(+) ion from donor protein on the cytoplasmic side of the membrane and delivers it to acceptor protein on the lumenal side. The transfer of Cu(+) ion across the membrane is coupled to ATP hydrolysis and is associated with a transient phosphorylation that shifts the pump conformation from inward-facing to outward-facing state. Under physiological conditions, at low cytosolic copper concentration, it is localized at the trans-Golgi network (TGN) where it transfers Cu(+) ions to cuproenzymes of the secretory pathway. Upon elevated cytosolic copper concentrations, it relocalizes to the plasma membrane where it is responsible for the export of excess Cu(+) ions. May play a dual role in neuron function and survival by regulating cooper efflux and neuronal transmission at the synapse as well as by supplying Cu(+) ions to enzymes such as PAM, TYR and SOD3. In the melanosomes of pigmented cells, provides copper cofactor to TYR to form an active TYR holoenzyme for melanin biosynthesis. The sequence is that of Copper-transporting ATPase 1 from Homo sapiens (Human).